Here is a 96-residue protein sequence, read N- to C-terminus: UPF0235 protein VC_0458 (96 aa).

It belongs to the UPF0235 family.

This chain is UPF0235 protein VC_0458, found in Vibrio cholerae serotype O1 (strain ATCC 39315 / El Tor Inaba N16961).